A 595-amino-acid chain; its full sequence is Methionine--tRNA ligase (595 aa).

Positions 11-21 (PYANGPRHIGH) match the 'HIGH' region motif. Cys-143, Cys-146, Cys-156, and Cys-159 together coordinate Zn(2+). The short motif at 350-354 (KFSSS) is the 'KMSKS' region element. Residue Ser-353 coordinates ATP.

The protein belongs to the class-I aminoacyl-tRNA synthetase family. MetG type 1 subfamily. As to quaternary structure, monomer. Zn(2+) is required as a cofactor.

Its subcellular location is the cytoplasm. It carries out the reaction tRNA(Met) + L-methionine + ATP = L-methionyl-tRNA(Met) + AMP + diphosphate. Functionally, is required not only for elongation of protein synthesis but also for the initiation of all mRNA translation through initiator tRNA(fMet) aminoacylation. The chain is Methionine--tRNA ligase from Nocardioides sp. (strain ATCC BAA-499 / JS614).